The primary structure comprises 726 residues: Catalase-peroxidase (726 aa).

The segment at residues 90–213 is a cross-link (tryptophyl-tyrosyl-methioninium (Trp-Tyr) (with M-239)); the sequence is WHAAGTYRIG…LAAVQMGLIY (124 aa). H91 serves as the catalytic Proton acceptor. Residues 213-239 constitute a cross-link (tryptophyl-tyrosyl-methioninium (Tyr-Met) (with W-90)); it reads YVNPEGPNGKPDPAAAARDIRETFARM. H254 is a heme b binding site. The segment at 338–359 is disordered; the sequence is TPKGGAGAGTVPDAHDPSKRHA.

This sequence belongs to the peroxidase family. Peroxidase/catalase subfamily. Homodimer or homotetramer. Heme b serves as cofactor. Post-translationally, formation of the three residue Trp-Tyr-Met cross-link is important for the catalase, but not the peroxidase activity of the enzyme.

The enzyme catalyses H2O2 + AH2 = A + 2 H2O. It catalyses the reaction 2 H2O2 = O2 + 2 H2O. Bifunctional enzyme with both catalase and broad-spectrum peroxidase activity. The sequence is that of Catalase-peroxidase from Bradyrhizobium sp. (strain ORS 278).